A 130-amino-acid polypeptide reads, in one-letter code: Small ribosomal subunit protein uS11c (130 aa).

It belongs to the universal ribosomal protein uS11 family. Part of the 30S ribosomal subunit.

It localises to the plastid. The protein localises to the chloroplast. This chain is Small ribosomal subunit protein uS11c, found in Marsilea quadrifolia (European water clover).